The chain runs to 347 residues: D-alanine--D-alanine ligase (347 aa).

One can recognise an ATP-grasp domain in the interval 134 to 332 (KLYAKDLGVK…LAQSLPKTPK (199 aa)). 161-216 (LMNFNFPFIIKPNNAGSSLGVNVVKEEKELVYALDGAFEYSKEVLIEPFIQGVKEY) is a binding site for ATP. Residues Asp288, Glu300, and Asn302 each contribute to the Mg(2+) site.

The protein belongs to the D-alanine--D-alanine ligase family. It depends on Mg(2+) as a cofactor. Mn(2+) is required as a cofactor.

The protein localises to the cytoplasm. The catalysed reaction is 2 D-alanine + ATP = D-alanyl-D-alanine + ADP + phosphate + H(+). It participates in cell wall biogenesis; peptidoglycan biosynthesis. In terms of biological role, cell wall formation. This Helicobacter pylori (strain ATCC 700392 / 26695) (Campylobacter pylori) protein is D-alanine--D-alanine ligase.